Here is a 608-residue protein sequence, read N- to C-terminus: Protein trichome birefringence (608 aa).

Residues 38–58 form a helical; Signal-anchor for type II membrane protein membrane-spanning segment; that stretch reads TFAYAFVITFVSFTLFFAFSP. Composition is skewed to polar residues over residues 101–137 and 145–203; these read STKP…QTPA and AKNT…TSPA. Residues 101–236 form a disordered region; that stretch reads STKPTNRSSD…TPKKQTKTVD (136 aa). The span at 215 to 227 shows a compositional bias: low complexity; the sequence is TNSSSNSSTASST. The GDS motif signature appears at 328 to 330; it reads GDS. Residues 573-587 carry the DCXHWCLPGXXDXWN motif motif; that stretch reads DCSHWCLPGVPDSWN.

This sequence belongs to the PC-esterase family. TBL subfamily. As to expression, expressed in leaf vasculature, growing part of the root, expanding inflorescence stems and trichomes.

It is found in the membrane. Functionally, required during cellulose deposition. May act as a bridging protein that binds pectin and other cell wall polysaccharides. Probably involved in maintaining esterification of pectins. May be involved in the specific O-acetylation of cell wall polymers. The chain is Protein trichome birefringence (TBR) from Arabidopsis thaliana (Mouse-ear cress).